A 238-amino-acid polypeptide reads, in one-letter code: Probable solute-binding protein AdeT2 (238 aa).

Belongs to the bacterial solute-binding protein 7 family.

In terms of biological role, mediates antimicrobial resistance via active efflux. Contributes to resistance to antibiotics such as chloramphenicol, erythromycin and novobiocin. May be part of a tripartite ATP-independent periplasmic (TRAP) transport system. This is Probable solute-binding protein AdeT2 from Acinetobacter baumannii.